A 693-amino-acid chain; its full sequence is Elongation factor G (693 aa).

Residues 8 to 282 (KNTRNIGIMA…AVIDYLPSPL (275 aa)) form the tr-type G domain. Residues 17-24 (AHIDAGKT), 81-85 (DTPGH), and 135-138 (NKMD) each bind GTP.

It belongs to the TRAFAC class translation factor GTPase superfamily. Classic translation factor GTPase family. EF-G/EF-2 subfamily.

Its subcellular location is the cytoplasm. Catalyzes the GTP-dependent ribosomal translocation step during translation elongation. During this step, the ribosome changes from the pre-translocational (PRE) to the post-translocational (POST) state as the newly formed A-site-bound peptidyl-tRNA and P-site-bound deacylated tRNA move to the P and E sites, respectively. Catalyzes the coordinated movement of the two tRNA molecules, the mRNA and conformational changes in the ribosome. This Staphylococcus intermedius protein is Elongation factor G.